Here is a 196-residue protein sequence, read N- to C-terminus: ATP synthase subunit b 2 (196 aa).

The segment covering 1 to 18 (MVVAQAGAPAHPPAAHGA) has biased composition (low complexity). The segment at 1–33 (MVVAQAGAPAHPPAAHGAEAGHGEAAGGEHGGF) is disordered. The helical transmembrane segment at 41-60 (FASQLIWLIVSFGALYFLMS) threads the bilayer.

Belongs to the ATPase B chain family. As to quaternary structure, F-type ATPases have 2 components, F(1) - the catalytic core - and F(0) - the membrane proton channel. F(1) has five subunits: alpha(3), beta(3), gamma(1), delta(1), epsilon(1). F(0) has three main subunits: a(1), b(2) and c(10-14). The alpha and beta chains form an alternating ring which encloses part of the gamma chain. F(1) is attached to F(0) by a central stalk formed by the gamma and epsilon chains, while a peripheral stalk is formed by the delta and b chains.

The protein localises to the cell inner membrane. Functionally, f(1)F(0) ATP synthase produces ATP from ADP in the presence of a proton or sodium gradient. F-type ATPases consist of two structural domains, F(1) containing the extramembraneous catalytic core and F(0) containing the membrane proton channel, linked together by a central stalk and a peripheral stalk. During catalysis, ATP synthesis in the catalytic domain of F(1) is coupled via a rotary mechanism of the central stalk subunits to proton translocation. Component of the F(0) channel, it forms part of the peripheral stalk, linking F(1) to F(0). The b'-subunit is a diverged and duplicated form of b found in plants and photosynthetic bacteria. This is ATP synthase subunit b 2 (atpF2) from Azorhizobium caulinodans (strain ATCC 43989 / DSM 5975 / JCM 20966 / LMG 6465 / NBRC 14845 / NCIMB 13405 / ORS 571).